The primary structure comprises 675 residues: Methionine--tRNA ligase (675 aa).

The short motif at 12-22 (PYANGPIHLGH) is the 'HIGH' region element. The Zn(2+) site is built by Cys143, Cys146, Cys156, and Cys159. The 'KMSKS' region motif lies at 328–332 (KMSKS). Residue Lys331 coordinates ATP. The region spanning 574–675 (DFAKVDLRIA…QGAQPGMRVK (102 aa)) is the tRNA-binding domain.

Belongs to the class-I aminoacyl-tRNA synthetase family. MetG type 1 subfamily. Homodimer. Zn(2+) serves as cofactor.

It is found in the cytoplasm. The enzyme catalyses tRNA(Met) + L-methionine + ATP = L-methionyl-tRNA(Met) + AMP + diphosphate. Functionally, is required not only for elongation of protein synthesis but also for the initiation of all mRNA translation through initiator tRNA(fMet) aminoacylation. In Alkalilimnicola ehrlichii (strain ATCC BAA-1101 / DSM 17681 / MLHE-1), this protein is Methionine--tRNA ligase.